We begin with the raw amino-acid sequence, 461 residues long: Transcription factor phm6 (461 aa).

Residues 18 to 50 (CNRCRNHKLKCVVTEAPNGTACCQRCIRAMVPC) constitute a DNA-binding region (zn(2)-C6 fungal-type). Disordered stretches follow at residues 55–79 (RERK…PWET) and 256–278 (LQTD…VGAT). The segment covering 256–274 (LQTDDSSSTQSESSRSRAS) has biased composition (low complexity).

Its subcellular location is the nucleus. Transcription factor that regulates the expression of the gene cluster that mediates the biosynthesis of the trans-fused decalin-containing tetramic acid phomasetin. The protein is Transcription factor phm6 of Pyrenochaetopsis sp.